The following is a 335-amino-acid chain: Fructose-1,6-bisphosphatase class 1 (335 aa).

The Mg(2+) site is built by E93, D117, L119, and D120. Substrate is bound by residues 120–123 (DGSS), N213, Y244, and K274. E280 lines the Mg(2+) pocket.

The protein belongs to the FBPase class 1 family. Homotetramer. Mg(2+) serves as cofactor.

Its subcellular location is the cytoplasm. It catalyses the reaction beta-D-fructose 1,6-bisphosphate + H2O = beta-D-fructose 6-phosphate + phosphate. It functions in the pathway carbohydrate biosynthesis; gluconeogenesis. This is Fructose-1,6-bisphosphatase class 1 from Flavobacterium psychrophilum (strain ATCC 49511 / DSM 21280 / CIP 103535 / JIP02/86).